A 283-amino-acid chain; its full sequence is MSSGATPAAVKIGIIGGTGLDDPEILEGRTEKYVDTPFGKPSDALVLGKIKNVDCVLLARHGRQHTIMPSKVNYQANIWALKEEGCTHVIVTTACGSLKEEIQPGDIIIIDQFIDRTTRRLQTFYDGNHSCARGVCHIPMAEPFCPKTREVLIETAKKLGLRCHSKGTMITIEGPRFSSRAESIMFQTWGADVINMTTVPEVVLAKEAGICYASIAMATDYDCWKEHEEAVSVDRVLKTLKENANKAKSLLLTTIPQIGSMEWSETLHNMKKMAQFSVLLPRH.

Thr-18 provides a ligand contact to phosphate. Lys-51 carries the post-translational modification N6-acetyllysine. Phosphate is bound by residues Arg-60 to His-61 and Thr-93 to Ala-94. Met-196 serves as a coordination point for substrate. Thr-197 contributes to the phosphate binding site. Asp-220 to Asp-222 contacts substrate.

The protein belongs to the PNP/MTAP phosphorylase family. MTAP subfamily. Homotrimer.

It is found in the cytoplasm. The protein localises to the nucleus. The enzyme catalyses S-methyl-5'-thioadenosine + phosphate = 5-(methylsulfanyl)-alpha-D-ribose 1-phosphate + adenine. It functions in the pathway amino-acid biosynthesis; L-methionine biosynthesis via salvage pathway; S-methyl-5-thio-alpha-D-ribose 1-phosphate from S-methyl-5'-thioadenosine (phosphorylase route): step 1/1. Its function is as follows. Catalyzes the reversible phosphorylation of S-methyl-5'-thioadenosine (MTA) to adenine and 5-methylthioribose-1-phosphate. Involved in the breakdown of MTA, a major by-product of polyamine biosynthesis. Responsible for the first step in the methionine salvage pathway after MTA has been generated from S-adenosylmethionine. Has broad substrate specificity with 6-aminopurine nucleosides as preferred substrates. The chain is S-methyl-5'-thioadenosine phosphorylase from Bos taurus (Bovine).